The sequence spans 75 residues: Small ribosomal subunit protein bS18 (75 aa).

The protein belongs to the bacterial ribosomal protein bS18 family. Part of the 30S ribosomal subunit. Forms a tight heterodimer with protein bS6.

Its function is as follows. Binds as a heterodimer with protein bS6 to the central domain of the 16S rRNA, where it helps stabilize the platform of the 30S subunit. In Histophilus somni (strain 129Pt) (Haemophilus somnus), this protein is Small ribosomal subunit protein bS18.